A 462-amino-acid chain; its full sequence is TNF receptor-associated factor family protein DDB_G0267754 (462 aa).

An RING-type; degenerate zinc finger spans residues 24 to 62 (CCVCECLLIEALQCRNGHVACKNCFIKIVKSKKECMTCR). A disordered region spans residues 104 to 127 (KNGNGNEGSSANEIEQPQQPQQQQ). 2 consecutive TRAF-type zinc fingers follow at residues 150–217 (SHLK…SHTE) and 214–273 (SHTE…NQLA). One can recognise an MATH domain in the interval 326-449 (MFRGKWVISN…NDTLTINFSI (124 aa)).

This sequence belongs to the TNF receptor-associated factor family. A subfamily.

The protein localises to the cytoplasm. Its function is as follows. Probable adapter protein and signal transducer that links members of the tumor necrosis factor receptor family to different signaling pathways by association with the receptor cytoplasmic domain and kinases. In Dictyostelium discoideum (Social amoeba), this protein is TNF receptor-associated factor family protein DDB_G0267754.